The sequence spans 466 residues: 3-isopropylmalate dehydratase large subunit (466 aa).

[4Fe-4S] cluster is bound by residues Cys347, Cys407, and Cys410.

This sequence belongs to the aconitase/IPM isomerase family. LeuC type 1 subfamily. Heterodimer of LeuC and LeuD. [4Fe-4S] cluster is required as a cofactor.

The enzyme catalyses (2R,3S)-3-isopropylmalate = (2S)-2-isopropylmalate. It functions in the pathway amino-acid biosynthesis; L-leucine biosynthesis; L-leucine from 3-methyl-2-oxobutanoate: step 2/4. Its function is as follows. Catalyzes the isomerization between 2-isopropylmalate and 3-isopropylmalate, via the formation of 2-isopropylmaleate. This chain is 3-isopropylmalate dehydratase large subunit, found in Shigella flexneri serotype 5b (strain 8401).